Reading from the N-terminus, the 324-residue chain is Galactosylgalactosylxylosylprotein 3-beta-glucuronosyltransferase 2 (324 aa).

Residues 1 to 2 (MK) lie on the Cytoplasmic side of the membrane. A helical; Signal-anchor for type II membrane protein membrane pass occupies residues 3–23 (SALCNRFFILLPWILIVIIML). At 24-324 (DVDPRRPAPQ…YHMDTVNIEV (301 aa)) the chain is on the lumenal side. Residues 34 to 78 (LTSRPYFSPHTVGCGGSRVPLRRSSPGRDAAEKRNESRPQLQPEP) are disordered. Residue Asn68 is glycosylated (N-linked (GlcNAc...) asparagine). Asp188 is a binding site for Mn(2+). Residue Glu274 is the Proton acceptor of the active site. Asn293 carries N-linked (GlcNAc...) asparagine glycosylation.

This sequence belongs to the glycosyltransferase 43 family. Homodimer. The cofactor is Mn(2+). Expressed in the cerebral cortex, cerebellum and whole brain.

It localises to the golgi apparatus membrane. The catalysed reaction is 3-O-(beta-D-galactosyl-(1-&gt;3)-beta-D-galactosyl-(1-&gt;4)-beta-D-xylosyl)-L-seryl-[protein] + UDP-alpha-D-glucuronate = 3-O-(beta-D-GlcA-(1-&gt;3)-beta-D-Gal-(1-&gt;3)-beta-D-Gal-(1-&gt;4)-beta-D-Xyl)-L-seryl-[protein] + UDP + H(+). Its pathway is protein modification; protein glycosylation. Its function is as follows. Involved in the biosynthesis of L2/HNK-1 carbohydrate epitope on both glycolipids and glycoproteins. Substrates include asialo-orosomucoid (ASOR), paragloboside (lacto-N-neotetraosylceramide), Gal-beta-1,4-GlcNAc-beta-1,3-Gal-beta-1,4-Glc-pyridylamine and Gal-beta-1,3-GlcNAc-beta-1,3-Gal-beta-1,4-Glc-pyridylamine. This Rattus norvegicus (Rat) protein is Galactosylgalactosylxylosylprotein 3-beta-glucuronosyltransferase 2 (B3gat2).